A 165-amino-acid polypeptide reads, in one-letter code: 3-isopropylmalate dehydratase small subunit 2 (165 aa).

The protein belongs to the LeuD family. LeuD type 2 subfamily. As to quaternary structure, heterodimer of LeuC and LeuD.

It carries out the reaction (2R,3S)-3-isopropylmalate = (2S)-2-isopropylmalate. The protein operates within amino-acid biosynthesis; L-leucine biosynthesis; L-leucine from 3-methyl-2-oxobutanoate: step 2/4. Its function is as follows. Catalyzes the isomerization between 2-isopropylmalate and 3-isopropylmalate, via the formation of 2-isopropylmaleate. This Archaeoglobus fulgidus (strain ATCC 49558 / DSM 4304 / JCM 9628 / NBRC 100126 / VC-16) protein is 3-isopropylmalate dehydratase small subunit 2 (leuD2).